A 160-amino-acid chain; its full sequence is Cytochrome b6-f complex subunit 4 (160 aa).

3 consecutive transmembrane segments (helical) span residues 36–56 (LLYT…GLAL), 95–115 (LLGV…PFIE), and 127–147 (PIAT…GIGA).

The protein belongs to the cytochrome b family. PetD subfamily. As to quaternary structure, the 4 large subunits of the cytochrome b6-f complex are cytochrome b6, subunit IV (17 kDa polypeptide, petD), cytochrome f and the Rieske protein, while the 4 small subunits are petG, petL, petM and petN. The complex functions as a dimer.

It localises to the plastid. Its subcellular location is the chloroplast thylakoid membrane. In terms of biological role, component of the cytochrome b6-f complex, which mediates electron transfer between photosystem II (PSII) and photosystem I (PSI), cyclic electron flow around PSI, and state transitions. The sequence is that of Cytochrome b6-f complex subunit 4 from Cyanidioschyzon merolae (strain NIES-3377 / 10D) (Unicellular red alga).